A 27-amino-acid chain; its full sequence is Augerpeptide hhe6.2 (27 aa).

Cystine bridges form between C4/C13, C8/C20, and C12/C27.

Expressed by the venom duct.

Its subcellular location is the secreted. The chain is Augerpeptide hhe6.2 from Hastula hectica (Sea snail).